The sequence spans 875 residues: Ectonucleotide pyrophosphatase/phosphodiesterase family member 3 (875 aa).

Topologically, residues 1–11 (MDSRLALATEE) are cytoplasmic. Residues 12-30 (PIKKDSLKRYKILCAVLLA) form a helical; Signal-anchor for type II membrane protein membrane-spanning segment. The Extracellular portion of the chain corresponds to 31–875 (LLVIVSLGLG…TYLPTFETII (845 aa)). SMB domains are found at residues 51–94 (HIGS…VKST) and 95–139 (QIWT…GEVP). 10 disulfides stabilise this stretch: Cys55–Cys72, Cys59–Cys90, Cys70–Cys83, Cys76–Cys82, Cys99–Cys116, Cys104–Cys134, Cys114–Cys127, Cys120–Cys126, Cys145–Cys191, and Cys153–Cys365. The short motif at 79 to 81 (RGD) is the Cell attachment site element. Residues 161-545 (PVILFSMDGF…HGSLNHLLKA (385 aa)) form a phosphodiesterase region. Position 168 (Asp168) interacts with Zn(2+). Lys205 contacts ATP. Zn(2+) is bound at residue Thr206. The active-site Nucleophile is the Thr206. Asn227 is a binding site for ATP. Asn237 is a glycosylation site (N-linked (GlcNAc...) asparagine). Position 276 (Asp276) interacts with ATP. Asn280 and Asn289 each carry an N-linked (GlcNAc...) asparagine glycan. Tyr290 contacts ATP. The Zn(2+) site is built by Asp326, His330, Asp373, and His374. Disulfide bonds link Cys381–Cys478, Cys429–Cys818, Cys562–Cys623, Cys575–Cys679, Cys577–Cys664, and Cys787–Cys797. His483 lines the Zn(2+) pocket. N-linked (GlcNAc...) asparagine glycans are attached at residues Asn533, Asn574, Asn594, and Asn702. A nuclease region spans residues 582 to 875 (TSGQEEQVNQ…TYLPTFETII (294 aa)). Positions 752, 754, 756, 758, and 760 each coordinate Ca(2+). A glycan (N-linked (GlcNAc...) asparagine) is linked at Asn789.

Belongs to the nucleotide pyrophosphatase/phosphodiesterase family. As to quaternary structure, monomer and homodimer. Zn(2+) is required as a cofactor. Post-translationally, the N-terminal is blocked. N-glycosylated. N-glycosylation is necessary for normal transport to the cell membrane, but is not the apical targeting signal. Detected in intestinal epithelium and liver (at protein level).

The protein resides in the cell membrane. It localises to the apical cell membrane. The protein localises to the secreted. The catalysed reaction is Hydrolytically removes 5'-nucleotides successively from the 3'-hydroxy termini of 3'-hydroxy-terminated oligonucleotides.. The enzyme catalyses a ribonucleoside 5'-triphosphate + H2O = a ribonucleoside 5'-phosphate + diphosphate + H(+). It catalyses the reaction ATP + H2O = AMP + diphosphate + H(+). It carries out the reaction CTP + H2O = CMP + diphosphate + H(+). The catalysed reaction is GTP + H2O = GMP + diphosphate + H(+). The enzyme catalyses UTP + H2O = UMP + diphosphate + H(+). It catalyses the reaction UDP-N-acetyl-alpha-D-glucosamine + H2O = N-acetyl-alpha-D-glucosamine 1-phosphate + UMP + 2 H(+). It carries out the reaction P(1),P(3)-bis(5'-adenosyl) triphosphate + H2O = AMP + ADP + 2 H(+). The catalysed reaction is P(1),P(4)-bis(5'-adenosyl) tetraphosphate + H2O = AMP + ATP + 2 H(+). The enzyme catalyses P(1),P(5)-bis(5'-adenosyl) pentaphosphate + H2O = adenosine 5'-tetraphosphate + AMP + 2 H(+). It catalyses the reaction P(1),P(4)-bis(5'-guanosyl) tetraphosphate + H2O = GMP + GTP + 2 H(+). Functionally, hydrolase that metabolizes extracellular nucleotides, including ATP, GTP, UTP and CTP. Limits mast cells and basophils response during inflammation and during the chronic phases of allergic responses by eliminating extracellular ATP, a signaling molecule activating these cells in an autocrine manner. Metabolizes extracellular ATP in the lumen of the small intestine, and thereby prevents ATP-induced apoptosis of intestinal plasmacytoid dendritic cells. Has a broad specificity and can also hydrolyze UDP-GlcNAc into UMP and GlcNAc-1-phosphate and potentially several other intracellular nucleotide sugars, including UDP-GalNAc, CMP-NeuAc, GDP-Fuc, and UDP-GlcA. Thereby, could modulate glycan biosynthesis and protein glycosylation. Can hydrolyze extracellular dinucleoside polyphosphates, including the vasoactive adenosine polyphosphates as well. In addition, displays an alkaline phosphodiesterase activity in vitro. The chain is Ectonucleotide pyrophosphatase/phosphodiesterase family member 3 from Rattus norvegicus (Rat).